Reading from the N-terminus, the 161-residue chain is Interleukin-17F (161 aa).

The first 28 residues, 1–28 (MKCTRETAMVKSLLLLMLGLAILREVAA), serve as a signal peptide directing secretion. Residue N83 is glycosylated (N-linked (GlcNAc...) asparagine). 2 disulfide bridges follow: C100-C150 and C105-C152.

It belongs to the IL-17 family. Homodimer; disulfide-linked. Heterodimer with IL17A (IL17A-IL17F). Forms complexes with IL17RA and IL17RC receptors with 2:1 binding stoichiometry: two receptor chains for one interleukin molecule. IL17F homodimer forms predominantly complexes with IL17RC homodimer, whereas IL17A-IL17F favors complexes with IL17RA-IL17RC. IL17RA and IL17RC chains cannot distinguish between IL17A and IL17F molecules, potentially enabling the formation of topologically distinct complexes. As to expression, expressed by T-helper 17 cells (Th17) (at protein level). The expression pattern reflects the differentiation state. In fully differentiated Th17 cells, IL17A-IL17F heterodimers are produced at higher levels than IL17A-IL17A and IL17F-IL17F dimers. Dominantly secreted in intestine. Expressed by resident cells of the lamina propria, both epithelial cells and immune cell subsets including natural killer cells, dendritic cells, macrophages and various T and B cell subsets. Expressed by epithelial cells and innate immune cells in the colon. Expressed in group 3 innate lymphoid cells.

It is found in the secreted. Its function is as follows. Effector cytokine of innate and adaptive immune system involved in antimicrobial host defense and maintenance of tissue integrity. IL17A-IL17F signals via IL17RA-IL17RC heterodimeric receptor complex, triggering homotypic interaction of IL17RA and IL17RC chains with TRAF3IP2 adapter through SEFIR domains. This leads to downstream TRAF6-mediated activation of NF-kappa-B and MAPkinase pathways ultimately resulting in transcriptional activation of cytokines, chemokines, antimicrobial peptides and matrix metalloproteinases, with potential strong immune inflammation. IL17A-IL17F is primarily involved in host defense against extracellular bacteria and fungi by inducing neutrophilic inflammation. As signature effector cytokine of T-helper 17 cells (Th17), primarily induces neutrophil activation and recruitment at infection and inflammatory sites. Stimulates the production of antimicrobial beta-defensins DEFB1, DEFB103A, and DEFB104A by mucosal epithelial cells, limiting the entry of microbes through the epithelial barriers. IL17F homodimer can signal via IL17RC homodimeric receptor complex, triggering downstream activation of TRAF6 and NF-kappa-B signaling pathway. Via IL17RC induces transcriptional activation of IL33, a potent cytokine that stimulates group 2 innate lymphoid cells and adaptive T-helper 2 cells involved in pulmonary allergic response to fungi. Likely via IL17RC, promotes sympathetic innervation of peripheral organs by coordinating the communication between gamma-delta T cells and parenchymal cells. Stimulates sympathetic innervation of thermogenic adipose tissue by driving TGFB1 expression. Regulates the composition of intestinal microbiota and immune tolerance by inducing antimicrobial proteins that specifically control the growth of commensal Firmicutes and Bacteroidetes. This chain is Interleukin-17F (Il17f), found in Mus musculus (Mouse).